A 387-amino-acid polypeptide reads, in one-letter code: G2/mitotic-specific cyclin-B2 (387 aa).

The protein belongs to the cyclin family. Cyclin AB subfamily. In terms of assembly, interacts with the CDK1 protein kinase to form a serine/threonine kinase holoenzyme complex also known as maturation promoting factor (MPF). The cyclin subunit imparts substrate specificity to the complex.

Essential for the control of the cell cycle at the G2/M (mitosis) transition. The protein is G2/mitotic-specific cyclin-B2 (ccnb2) of Oryzias latipes (Japanese rice fish).